We begin with the raw amino-acid sequence, 382 residues long: Queuine tRNA-ribosyltransferase (382 aa).

Residue Asp93 is the Proton acceptor of the active site. Substrate is bound by residues 93–97, Asp147, Gln191, and Gly218; that span reads DSGGF. The interval 249–255 is RNA binding; sequence GVGKPED. The active-site Nucleophile is the Asp268. An RNA binding; important for wobble base 34 recognition region spans residues 273 to 277; the sequence is TRNAR. Zn(2+)-binding residues include Cys306, Cys308, Cys311, and His337.

The protein belongs to the queuine tRNA-ribosyltransferase family. Homodimer. Within each dimer, one monomer is responsible for RNA recognition and catalysis, while the other monomer binds to the replacement base PreQ1. Requires Zn(2+) as cofactor.

The enzyme catalyses 7-aminomethyl-7-carbaguanine + guanosine(34) in tRNA = 7-aminomethyl-7-carbaguanosine(34) in tRNA + guanine. It functions in the pathway tRNA modification; tRNA-queuosine biosynthesis. Catalyzes the base-exchange of a guanine (G) residue with the queuine precursor 7-aminomethyl-7-deazaguanine (PreQ1) at position 34 (anticodon wobble position) in tRNAs with GU(N) anticodons (tRNA-Asp, -Asn, -His and -Tyr). Catalysis occurs through a double-displacement mechanism. The nucleophile active site attacks the C1' of nucleotide 34 to detach the guanine base from the RNA, forming a covalent enzyme-RNA intermediate. The proton acceptor active site deprotonates the incoming PreQ1, allowing a nucleophilic attack on the C1' of the ribose to form the product. After dissociation, two additional enzymatic reactions on the tRNA convert PreQ1 to queuine (Q), resulting in the hypermodified nucleoside queuosine (7-(((4,5-cis-dihydroxy-2-cyclopenten-1-yl)amino)methyl)-7-deazaguanosine). The sequence is that of Queuine tRNA-ribosyltransferase from Haemophilus influenzae (strain 86-028NP).